The primary structure comprises 1538 residues: Pentafunctional AROM polypeptide (1538 aa).

The segment at 1–384 (MGVPTKISIL…HEPRASTVSN (384 aa)) is 3-dehydroquinate synthase. NAD(+) is bound by residues 44 to 46 (DTN), 81 to 84 (ESSK), 114 to 116 (GGV), and Asp-119. Arg-130 contributes to the 7-phospho-2-dehydro-3-deoxy-D-arabino-heptonate binding site. 139-140 (TT) provides a ligand contact to NAD(+). 7-phospho-2-dehydro-3-deoxy-D-arabino-heptonate is bound by residues Asp-146 and Lys-152. NAD(+) is bound at residue Lys-161. Asn-162 is a 7-phospho-2-dehydro-3-deoxy-D-arabino-heptonate binding site. NAD(+)-binding positions include 179-182 (FLNT) and Asn-190. Residue Glu-194 participates in Zn(2+) binding. Residues 194-197 (EVIK) and Lys-250 each bind 7-phospho-2-dehydro-3-deoxy-D-arabino-heptonate. Glu-260 functions as the Proton acceptor; for 3-dehydroquinate synthase activity in the catalytic mechanism. 7-phospho-2-dehydro-3-deoxy-D-arabino-heptonate-binding positions include 264-268 (RNLLN) and His-271. His-271 contacts Zn(2+). His-275 (proton acceptor; for 3-dehydroquinate synthase activity) is an active-site residue. Positions 287 and 356 each coordinate 7-phospho-2-dehydro-3-deoxy-D-arabino-heptonate. His-287 contributes to the Zn(2+) binding site. The tract at residues 397 to 842 (VSPGVPKGLD…WDCLSQTFKV (446 aa)) is EPSP synthase. Cys-824 functions as the For EPSP synthase activity in the catalytic mechanism. Residues 866–973 (ASIFIIGMRG…RRKQNTFFVS (108 aa)) are shikimate kinase. An ATP-binding site is contributed by 872-879 (GMRGAGKT). Residues 974-1194 (LTLPDLGLAA…AAPGQLSARE (221 aa)) form a 3-dehydroquinase region. His-1097 (proton acceptor; for 3-dehydroquinate dehydratase activity) is an active-site residue. Lys-1125 (schiff-base intermediate with substrate; for 3-dehydroquinate dehydratase activity) is an active-site residue. A shikimate dehydrogenase region spans residues 1207–1538 (AKKFAVIGNP…YEHPVLNHSS (332 aa)).

It in the N-terminal section; belongs to the sugar phosphate cyclases superfamily. Dehydroquinate synthase family. The protein in the 2nd section; belongs to the EPSP synthase family. In the 3rd section; belongs to the shikimate kinase family. This sequence in the 4th section; belongs to the type-I 3-dehydroquinase family. It in the C-terminal section; belongs to the shikimate dehydrogenase family. Homodimer. Zn(2+) is required as a cofactor.

Its subcellular location is the cytoplasm. The catalysed reaction is 7-phospho-2-dehydro-3-deoxy-D-arabino-heptonate = 3-dehydroquinate + phosphate. It carries out the reaction 3-dehydroquinate = 3-dehydroshikimate + H2O. It catalyses the reaction shikimate + NADP(+) = 3-dehydroshikimate + NADPH + H(+). The enzyme catalyses shikimate + ATP = 3-phosphoshikimate + ADP + H(+). The catalysed reaction is 3-phosphoshikimate + phosphoenolpyruvate = 5-O-(1-carboxyvinyl)-3-phosphoshikimate + phosphate. Its pathway is metabolic intermediate biosynthesis; chorismate biosynthesis; chorismate from D-erythrose 4-phosphate and phosphoenolpyruvate: step 2/7. It functions in the pathway metabolic intermediate biosynthesis; chorismate biosynthesis; chorismate from D-erythrose 4-phosphate and phosphoenolpyruvate: step 3/7. The protein operates within metabolic intermediate biosynthesis; chorismate biosynthesis; chorismate from D-erythrose 4-phosphate and phosphoenolpyruvate: step 4/7. It participates in metabolic intermediate biosynthesis; chorismate biosynthesis; chorismate from D-erythrose 4-phosphate and phosphoenolpyruvate: step 5/7. Its pathway is metabolic intermediate biosynthesis; chorismate biosynthesis; chorismate from D-erythrose 4-phosphate and phosphoenolpyruvate: step 6/7. The AROM polypeptide catalyzes 5 consecutive enzymatic reactions in prechorismate polyaromatic amino acid biosynthesis. The sequence is that of Pentafunctional AROM polypeptide from Ajellomyces capsulatus (strain NAm1 / WU24) (Darling's disease fungus).